The sequence spans 77 residues: Putative snRNP Sm-like protein (77 aa).

One can recognise a Sm domain in the interval 4-76 (RPLDVLNRSL…VVFVSPAPGG (73 aa)).

It belongs to the snRNP Sm proteins family.

The chain is Putative snRNP Sm-like protein from Archaeoglobus fulgidus (strain ATCC 49558 / DSM 4304 / JCM 9628 / NBRC 100126 / VC-16).